The following is an 84-amino-acid chain: Small ribosomal subunit protein uS17 (84 aa).

It belongs to the universal ribosomal protein uS17 family. In terms of assembly, part of the 30S ribosomal subunit.

In terms of biological role, one of the primary rRNA binding proteins, it binds specifically to the 5'-end of 16S ribosomal RNA. This Caldanaerobacter subterraneus subsp. tengcongensis (strain DSM 15242 / JCM 11007 / NBRC 100824 / MB4) (Thermoanaerobacter tengcongensis) protein is Small ribosomal subunit protein uS17.